Reading from the N-terminus, the 436-residue chain is MADSRNASLFERARRSIPGGVNSPVRAFRAVGGTPRFIARADGAYLWDADGKRYIDYIGSWGPMILGHGHPAVLEAVQKAATEGFSFGAPTEREVELAEEILKLVPSAEQVRLVSSGTEAAMSALRLARGATGRSKIVKFEGCYHGHADALLVKAGSGLATFGHPTSAGVPTEVVQHTLVLTYNDVTGLEAAFSAHGAEIACVMIEPIAGNMNFVRAGLPFMKRLRELCTQHGALLVFDEVMTGFRVALGGAQSLYAKAIPGFKPDLSVFGKVIGGGMPLAAFAGPRAIMEQLAPLGPVYQAGTLSGNPVATACGLATLREIQKPGFFESLAAGTRDLLDGLLHAATAAGVPMVGDCEGGMFGFFFPKTAQAALPQNYVEVMATDGERFNRYFHGMLDRGVYLAPALYEAGFVSAAHTPADIEATLAAARATLAAA.

At lysine 272 the chain carries N6-(pyridoxal phosphate)lysine.

It belongs to the class-III pyridoxal-phosphate-dependent aminotransferase family. HemL subfamily. In terms of assembly, homodimer. The cofactor is pyridoxal 5'-phosphate.

The protein localises to the cytoplasm. The catalysed reaction is (S)-4-amino-5-oxopentanoate = 5-aminolevulinate. Its pathway is porphyrin-containing compound metabolism; protoporphyrin-IX biosynthesis; 5-aminolevulinate from L-glutamyl-tRNA(Glu): step 2/2. It participates in porphyrin-containing compound metabolism; chlorophyll biosynthesis. The protein is Glutamate-1-semialdehyde 2,1-aminomutase of Methylibium petroleiphilum (strain ATCC BAA-1232 / LMG 22953 / PM1).